Here is a 342-residue protein sequence, read N- to C-terminus: Histidinol-phosphate aminotransferase 2 (342 aa).

Residue Lys-206 is modified to N6-(pyridoxal phosphate)lysine.

It belongs to the class-II pyridoxal-phosphate-dependent aminotransferase family. Histidinol-phosphate aminotransferase subfamily. The cofactor is pyridoxal 5'-phosphate.

The catalysed reaction is L-histidinol phosphate + 2-oxoglutarate = 3-(imidazol-4-yl)-2-oxopropyl phosphate + L-glutamate. It functions in the pathway amino-acid biosynthesis; L-histidine biosynthesis; L-histidine from 5-phospho-alpha-D-ribose 1-diphosphate: step 7/9. The protein is Histidinol-phosphate aminotransferase 2 (hisC2) of Archaeoglobus fulgidus (strain ATCC 49558 / DSM 4304 / JCM 9628 / NBRC 100126 / VC-16).